The sequence spans 198 residues: MIEQFLNNLILASSSERRIALLKQINIEPGLILPADIDEIPLRKELPKDYSIRMAKSKAEKIQSSNPDYFVLGIDTVVACGRRILLKAKNIEQAEKYIRLLSGRRHRVYTSVCLLTPDRSKQHIRTVVTIVKFKRLSEREIKYYLASEEWKNRAGGCNMQGLAGMFVLFLRGSYSSIIGLPLHETYCLLSNYFNLNLY.

Asp75 serves as the catalytic Proton acceptor.

Belongs to the Maf family. YhdE subfamily. It depends on a divalent metal cation as a cofactor.

It localises to the cytoplasm. It catalyses the reaction dTTP + H2O = dTMP + diphosphate + H(+). It carries out the reaction UTP + H2O = UMP + diphosphate + H(+). Its function is as follows. Nucleoside triphosphate pyrophosphatase that hydrolyzes dTTP and UTP. May have a dual role in cell division arrest and in preventing the incorporation of modified nucleotides into cellular nucleic acids. The chain is dTTP/UTP pyrophosphatase from Wolbachia sp. subsp. Brugia malayi (strain TRS).